The sequence spans 414 residues: Serine hydroxymethyltransferase (414 aa).

(6S)-5,6,7,8-tetrahydrofolate contacts are provided by residues leucine 116 and 120 to 122 (GHL). N6-(pyridoxal phosphate)lysine is present on lysine 224. Residues glutamate 240 and 348–350 (SPF) contribute to the (6S)-5,6,7,8-tetrahydrofolate site.

The protein belongs to the SHMT family. In terms of assembly, homodimer. Pyridoxal 5'-phosphate is required as a cofactor.

The protein resides in the cytoplasm. It carries out the reaction (6R)-5,10-methylene-5,6,7,8-tetrahydrofolate + glycine + H2O = (6S)-5,6,7,8-tetrahydrofolate + L-serine. The protein operates within one-carbon metabolism; tetrahydrofolate interconversion. It functions in the pathway amino-acid biosynthesis; glycine biosynthesis; glycine from L-serine: step 1/1. Functionally, catalyzes the reversible interconversion of serine and glycine with tetrahydrofolate (THF) serving as the one-carbon carrier. This reaction serves as the major source of one-carbon groups required for the biosynthesis of purines, thymidylate, methionine, and other important biomolecules. Also exhibits THF-independent aldolase activity toward beta-hydroxyamino acids, producing glycine and aldehydes, via a retro-aldol mechanism. The sequence is that of Serine hydroxymethyltransferase from Campylobacter jejuni (strain RM1221).